A 372-amino-acid chain; its full sequence is UDP-N-acetylglucosamine 2-epimerase (372 aa).

Substrate is bound by residues Arg-10, Lys-15, Asp-95, Glu-117, His-212, Gln-270, Phe-275, 289–291 (SGG), Glu-295, and Arg-312.

Belongs to the UDP-N-acetylglucosamine 2-epimerase family.

It catalyses the reaction UDP-N-acetyl-alpha-D-glucosamine = UDP-N-acetyl-alpha-D-mannosamine. The protein operates within capsule biogenesis; capsule polysaccharide biosynthesis. With respect to regulation, activated by UDP-GlcNAc and inhibited by 2-acetamidoglucal and UDP. Activity is strongly decreased in the presence of Co(2+) and abolished in the presence of Mn(2+) or Zn(2+). Catalyzes the interconversion between UDP-N-acetylglucosamine (UDP-GlcNAc) and UDP-N-acetylmannosamine (UDP-ManNAc). Involved in the biosynthesis of the capsular polysaccharides. In vitro, can also use several chemoenzymatically synthesized UDP-ManNAc derivatives as substrates, with lower efficiency. The chain is UDP-N-acetylglucosamine 2-epimerase from Neisseria meningitidis serogroup A / serotype 4A (strain DSM 15465 / Z2491).